Here is a 207-residue protein sequence, read N- to C-terminus: Uridine kinase (207 aa).

13–20 (GASGSGKT) contacts ATP.

Belongs to the uridine kinase family.

The protein localises to the cytoplasm. The catalysed reaction is uridine + ATP = UMP + ADP + H(+). The enzyme catalyses cytidine + ATP = CMP + ADP + H(+). Its pathway is pyrimidine metabolism; CTP biosynthesis via salvage pathway; CTP from cytidine: step 1/3. It participates in pyrimidine metabolism; UMP biosynthesis via salvage pathway; UMP from uridine: step 1/1. This chain is Uridine kinase, found in Ureaplasma parvum serovar 3 (strain ATCC 27815 / 27 / NCTC 11736).